The primary structure comprises 457 residues: Putative metabolite transport protein YwtG (457 aa).

A run of 12 helical transmembrane segments spans residues 7 to 27 (IWLY…TGVI), 38 to 58 (LGLN…GAIL), 75 to 95 (AIMA…LAPN), 97 to 117 (GVMV…TTIV), 136 to 156 (LNQL…YIFA), 163 to 183 (WMLG…LFMP), 240 to 260 (ALIA…NTII), 276 to 296 (ASIL…LVAI), 309 to 329 (LFGN…NLFF), 340 to 360 (VICL…VVWV), 377 to 397 (VSTL…PILM), and 400 to 420 (IGIS…FLFV). A disordered region spans residues 438 to 457 (DLRDKNGQGGAAGKQQTVGT).

Belongs to the major facilitator superfamily. Sugar transporter (TC 2.A.1.1) family.

It is found in the cell membrane. This is Putative metabolite transport protein YwtG (ywtG) from Bacillus subtilis (strain 168).